The primary structure comprises 264 residues: Thymidylate synthase 2 (264 aa).

Arg-21 contacts dUMP. His-51 serves as a coordination point for (6R)-5,10-methylene-5,6,7,8-tetrahydrofolate. 126–127 lines the dUMP pocket; sequence RR. The Nucleophile role is filled by Cys-146. DUMP is bound by residues 166-169, Asn-177, and 207-209; these read RSAD and HIY. Residue Asp-169 coordinates (6R)-5,10-methylene-5,6,7,8-tetrahydrofolate. Residue Ser-263 coordinates (6R)-5,10-methylene-5,6,7,8-tetrahydrofolate.

The protein belongs to the thymidylate synthase family. Bacterial-type ThyA subfamily. Homodimer.

The protein resides in the cytoplasm. The catalysed reaction is dUMP + (6R)-5,10-methylene-5,6,7,8-tetrahydrofolate = 7,8-dihydrofolate + dTMP. The protein operates within pyrimidine metabolism; dTTP biosynthesis. Functionally, catalyzes the reductive methylation of 2'-deoxyuridine-5'-monophosphate (dUMP) to 2'-deoxythymidine-5'-monophosphate (dTMP) while utilizing 5,10-methylenetetrahydrofolate (mTHF) as the methyl donor and reductant in the reaction, yielding dihydrofolate (DHF) as a by-product. This enzymatic reaction provides an intracellular de novo source of dTMP, an essential precursor for DNA biosynthesis. The polypeptide is Thymidylate synthase 2 (Bacillus spizizenii (strain ATCC 23059 / NRRL B-14472 / W23) (Bacillus subtilis subsp. spizizenii)).